Reading from the N-terminus, the 408-residue chain is Protein ZNF365 (408 aa).

Serine 16 bears the Phosphoserine mark. A C2H2-type; degenerate zinc finger spans residues 26–51 (FRCPRCGDHTRFRSLSSLRAHLEFSH). Residues serine 139 and serine 146 each carry the phosphoserine modification. Residues 170–298 (VEAVDRTIEK…QLEYYQSQQA (129 aa)) adopt a coiled-coil conformation. The residue at position 176 (threonine 176) is a Phosphothreonine. Position 370 is a phosphoserine (serine 370).

Homodimer. Interacts with NDE1 and NDEL1. Interacts with DISC1. Interacts with PARP1. Interacts with MCRS1. As to expression, detected in several tissues, with highest levels in brain. Also expressed during embryonic development. Expressed in cerebral cortex, hippocampus, striatum, inferior colliculus and thalamus.

Its subcellular location is the cytoplasm. The protein resides in the cytoskeleton. It localises to the microtubule organizing center. It is found in the centrosome. In terms of biological role, contributes to genomic stability by preventing telomere dysfunction. Involved in the morphogenesis of basket cells in the somatosensory cortex during embryogenesis. Involved in the positive regulation of oligodendrocyte differentiation during postnatal growth. Involved in dendritic arborization, morphogenesis of spine density dendrite, and establishment of postsynaptic dendrite density in cortical pyramidal neurons. Involved in the regulation of neurogenesis. Negatively regulates neurite outgrowth. Involved in homologous recombination (HR) repair pathway. Required for proper resolution of DNA double-strand breaks (DSBs) by HR. Is required for recovery of stalled replication forks, and directly contributes to genomic stability. Interacts with PARP1 and mediates MRE11-dependent DNA end resection during replication fork recovery. This Mus musculus (Mouse) protein is Protein ZNF365 (Znf365).